The primary structure comprises 258 residues: C1q-related factor (258 aa).

The N-terminal stretch at 1-16 is a signal peptide; the sequence is MLLVLVVLIPVLVSSG. Residues 39-117 form a disordered region; the sequence is GPGAGARTDG…PGLPGAGGSG (79 aa). The span at 67-77 shows a compositional bias: low complexity; that stretch reads GPQGKPGRTGK. The region spanning 67 to 115 is the Collagen-like domain; the sequence is GPQGKPGRTGKPGPPGPPGDPGPPGPVGPPGEKGEPGKPGPPGLPGAGG. The segment covering 78–95 has biased composition (pro residues); that stretch reads PGPPGPPGDPGPPGPVGP. One can recognise a C1q domain in the interval 125–258; it reads TTVPRVAFYA…TFSGFIIYSD (134 aa).

Interacts with ADGRB3. Forms heterooligomers with C1QL4, when proteins are coexpressed; this interaction does not occur after secretion. In terms of tissue distribution, expressed in brainstem.

The protein resides in the secreted. May regulate the number of excitatory synapses that are formed on hippocampus neurons. Has no effect on inhibitory synapses. The protein is C1q-related factor (C1QL1) of Homo sapiens (Human).